We begin with the raw amino-acid sequence, 146 residues long: 3-hydroxyacyl-[acyl-carrier-protein] dehydratase FabZ (146 aa).

H49 is a catalytic residue.

Belongs to the thioester dehydratase family. FabZ subfamily.

Its subcellular location is the cytoplasm. It carries out the reaction a (3R)-hydroxyacyl-[ACP] = a (2E)-enoyl-[ACP] + H2O. In terms of biological role, involved in unsaturated fatty acids biosynthesis. Catalyzes the dehydration of short chain beta-hydroxyacyl-ACPs and long chain saturated and unsaturated beta-hydroxyacyl-ACPs. The protein is 3-hydroxyacyl-[acyl-carrier-protein] dehydratase FabZ of Ectopseudomonas mendocina (strain ymp) (Pseudomonas mendocina).